A 141-amino-acid polypeptide reads, in one-letter code: Nucleoside diphosphate kinase (141 aa).

Residues K11, F59, R87, T93, R104, and N114 each contribute to the ATP site. H117 (pros-phosphohistidine intermediate) is an active-site residue.

The protein belongs to the NDK family. In terms of assembly, homotetramer. The cofactor is Mg(2+).

The protein resides in the cytoplasm. The enzyme catalyses a 2'-deoxyribonucleoside 5'-diphosphate + ATP = a 2'-deoxyribonucleoside 5'-triphosphate + ADP. The catalysed reaction is a ribonucleoside 5'-diphosphate + ATP = a ribonucleoside 5'-triphosphate + ADP. In terms of biological role, major role in the synthesis of nucleoside triphosphates other than ATP. The ATP gamma phosphate is transferred to the NDP beta phosphate via a ping-pong mechanism, using a phosphorylated active-site intermediate. This is Nucleoside diphosphate kinase from Legionella pneumophila (strain Lens).